Consider the following 313-residue polypeptide: Serine/threonine-protein kinase SZE1 (313 aa).

The N-myristoyl glycine moiety is linked to residue Gly-2. Positions 43 to 311 (MELGESLGYI…EVLDNLNAIA (269 aa)) constitute a Protein kinase domain. ATP is bound by residues 49–57 (LGYINPKTL) and Lys-71.

Belongs to the protein kinase superfamily. Ser/Thr protein kinase family. As to quaternary structure, component of an immune signaling complex made of, at least, SZE1, BKN2/SZE2, ZAR1 and ZED1. Interacts directly with ZED1, ZAR1 and Pseudomonas syringae HOPZ1A at the plasma membrane. In terms of processing, N-terminal myristoylation is critical for plasma membrane localization and implication in defense responses. Post-translationally, autophosphorylated. As to expression, expressed in roots, seedlings, rosette leaves, floral organs, siliques and inflorescence stems.

It localises to the cell membrane. It carries out the reaction L-seryl-[protein] + ATP = O-phospho-L-seryl-[protein] + ADP + H(+). The catalysed reaction is L-threonyl-[protein] + ATP = O-phospho-L-threonyl-[protein] + ADP + H(+). Together with BKN2/SZE2 and ZED1, required for effector-triggered immunity (e.g. Pseudomonas syringae effector type III HopZ1a) via the activation of ZAR1, thus being essential for resistance against P.syringae pv. tomato DC3000 expressing HopZ1a. This Arabidopsis thaliana (Mouse-ear cress) protein is Serine/threonine-protein kinase SZE1.